The primary structure comprises 309 residues: uncharacterized protein (309 aa).

This sequence belongs to the anthranilate phosphoribosyltransferase family.

This is an uncharacterized protein from Aquifex aeolicus (strain VF5).